Consider the following 803-residue polypeptide: Translation initiation factor IF-2 (803 aa).

Disordered regions lie at residues 93–123 (TKPV…LNEK) and 138–206 (EVKE…ASAK). The segment covering 111 to 121 (VPPTSDTTNLN) has biased composition (polar residues). Residues 138–155 (EVKEEAKKTPSEKKETPK) are compositionally biased toward basic and acidic residues. The segment covering 156–167 (KGPRKETRRSRK) has biased composition (basic residues). Residues 168–188 (PDKEDKWEREELHMTKLVEER) are compositionally biased toward basic and acidic residues. Residues 302–471 (PRAPVVTIMG…LLQAEVLELK (170 aa)) form the tr-type G domain. Residues 311 to 318 (GHVDHGKT) are G1. GTP is bound at residue 311-318 (GHVDHGKT). The interval 336 to 340 (GITQH) is G2. Residues 357-360 (DTPG) form a G3 region. Residues 357-361 (DTPGH) and 411-414 (NKID) each bind GTP. The tract at residues 411 to 414 (NKID) is G4. The interval 447-449 (SAK) is G5.

It belongs to the TRAFAC class translation factor GTPase superfamily. Classic translation factor GTPase family. IF-2 subfamily.

Its subcellular location is the cytoplasm. In terms of biological role, one of the essential components for the initiation of protein synthesis. Protects formylmethionyl-tRNA from spontaneous hydrolysis and promotes its binding to the 30S ribosomal subunits. Also involved in the hydrolysis of GTP during the formation of the 70S ribosomal complex. The protein is Translation initiation factor IF-2 of Coxiella burnetii (strain RSA 493 / Nine Mile phase I).